Reading from the N-terminus, the 206-residue chain is Ribosomal RNA small subunit methyltransferase G (206 aa).

S-adenosyl-L-methionine-binding positions include Gly74, Leu79, 125–126 (VE), and Arg140.

It belongs to the methyltransferase superfamily. RNA methyltransferase RsmG family.

Its subcellular location is the cytoplasm. The catalysed reaction is guanosine(527) in 16S rRNA + S-adenosyl-L-methionine = N(7)-methylguanosine(527) in 16S rRNA + S-adenosyl-L-homocysteine. Functionally, specifically methylates the N7 position of guanine in position 527 of 16S rRNA. The sequence is that of Ribosomal RNA small subunit methyltransferase G from Shewanella putrefaciens (strain CN-32 / ATCC BAA-453).